Here is a 258-residue protein sequence, read N- to C-terminus: 3-deoxy-manno-octulosonate cytidylyltransferase (258 aa).

Belongs to the KdsB family.

It is found in the cytoplasm. It carries out the reaction 3-deoxy-alpha-D-manno-oct-2-ulosonate + CTP = CMP-3-deoxy-beta-D-manno-octulosonate + diphosphate. It functions in the pathway nucleotide-sugar biosynthesis; CMP-3-deoxy-D-manno-octulosonate biosynthesis; CMP-3-deoxy-D-manno-octulosonate from 3-deoxy-D-manno-octulosonate and CTP: step 1/1. The protein operates within bacterial outer membrane biogenesis; lipopolysaccharide biosynthesis. Its function is as follows. Activates KDO (a required 8-carbon sugar) for incorporation into bacterial lipopolysaccharide in Gram-negative bacteria. The protein is 3-deoxy-manno-octulosonate cytidylyltransferase of Gemmatimonas aurantiaca (strain DSM 14586 / JCM 11422 / NBRC 100505 / T-27).